The sequence spans 276 residues: MIVIGRSIVHPYITNEYEPFANEKQQILSIMAGNQEIYSFRTSGELSFDLNLRVNIITSALELFQSGFQFRTFQQSFCNPQYWKRTSLGGFELLPNIPPSIAIQDIFKNGKLYGTECATAMIIIFYKALLALYEEETFNRLFANLLLYTWDYDQDLKLITKTGGDLVPGDLVYFKNPQVNPATIEWQGENTIYLGNFFFYGHGVGVKTKEEIIYALNERRVPYAFISAFLTDTITRIDSRLMSYHASPSTPQTSIGFIPIRDDAIVATVGNTTTVY.

It belongs to the bacillus TGase family.

The enzyme catalyses L-glutaminyl-[protein] + L-lysyl-[protein] = [protein]-L-lysyl-N(6)-5-L-glutamyl-[protein] + NH4(+). Functionally, probably plays a role in the assembly of the spore coat proteins by catalyzing epsilon-(gamma-glutamyl)lysine cross-links. The protein is Protein-glutamine gamma-glutamyltransferase of Bacillus cereus (strain AH187).